The following is a 72-amino-acid chain: MAKEDTLEFPGVVKELLPNATFRVELDNGHELIAVMAGKMRKNRIRVLAGDKVQVEMTPYDLSKGRINYRFK.

Positions 1-72 constitute an S1-like domain; sequence MAKEDTLEFP…SKGRINYRFK (72 aa).

Belongs to the IF-1 family. Component of the 30S ribosomal translation pre-initiation complex which assembles on the 30S ribosome in the order IF-2 and IF-3, IF-1 and N-formylmethionyl-tRNA(fMet); mRNA recruitment can occur at any time during PIC assembly.

It is found in the cytoplasm. Its function is as follows. One of the essential components for the initiation of protein synthesis. Stabilizes the binding of IF-2 and IF-3 on the 30S subunit to which N-formylmethionyl-tRNA(fMet) subsequently binds. Helps modulate mRNA selection, yielding the 30S pre-initiation complex (PIC). Upon addition of the 50S ribosomal subunit IF-1, IF-2 and IF-3 are released leaving the mature 70S translation initiation complex. The polypeptide is Translation initiation factor IF-1 (Cereibacter sphaeroides (strain ATCC 17029 / ATH 2.4.9) (Rhodobacter sphaeroides)).